The chain runs to 570 residues: KH homology domain-containing protein 4 (570 aa).

Residues 1–29 form a disordered region; sequence MSFGVPHSGGSRRSKWDQAGPDADAGSAP. KH domains follow at residues 77–157 and 210–292; these read DDLV…RIKE and VFVG…NLLQ. The segment covering 391–407 has biased composition (pro residues); sequence PPTAPVPPKLTAPPNPP. 3 disordered regions span residues 391-410, 438-500, and 512-570; these read PPTAPVPPKLTAPPNPPQKR, AGMP…EPQV, and GDSS…WMAP. A required for nuclear retention region spans residues 427–497; that stretch reads QHGPIHMTNL…ESPSAPSLLE (71 aa). A compositionally biased stretch (low complexity) spans 553–562; it reads TQTAPQPTQQ.

It belongs to the KHDC4 family. As to quaternary structure, interacts with PRPF19.

It is found in the nucleus. The protein localises to the cytoplasm. RNA-binding protein involved in pre-mRNA splicing. Interacts with the PRP19C/Prp19 complex/NTC/Nineteen complex which is part of the spliceosome. Involved in regulating splice site selection. Binds preferentially RNA with A/C rich sequences and poly-C stretches. This is KH homology domain-containing protein 4 (khdc4) from Danio rerio (Zebrafish).